The sequence spans 147 residues: Large ribosomal subunit protein uL16 (147 aa).

It belongs to the universal ribosomal protein uL16 family. Part of the 50S ribosomal subunit.

Binds 23S rRNA and is also seen to make contacts with the A and possibly P site tRNAs. The chain is Large ribosomal subunit protein uL16 from Clostridium acetobutylicum (strain ATCC 824 / DSM 792 / JCM 1419 / IAM 19013 / LMG 5710 / NBRC 13948 / NRRL B-527 / VKM B-1787 / 2291 / W).